A 240-amino-acid polypeptide reads, in one-letter code: 4-hydroxy-tetrahydrodipicolinate reductase (240 aa).

NAD(+) is bound by residues 8–13 (GSTGKM), 78–80 (GTT), and 102–105 (SANM). His-134 serves as the catalytic Proton donor/acceptor. His-135 provides a ligand contact to (S)-2,3,4,5-tetrahydrodipicolinate. Lys-138 functions as the Proton donor in the catalytic mechanism. A (S)-2,3,4,5-tetrahydrodipicolinate-binding site is contributed by 144–145 (GT).

The protein belongs to the DapB family.

It is found in the cytoplasm. The enzyme catalyses (S)-2,3,4,5-tetrahydrodipicolinate + NAD(+) + H2O = (2S,4S)-4-hydroxy-2,3,4,5-tetrahydrodipicolinate + NADH + H(+). It catalyses the reaction (S)-2,3,4,5-tetrahydrodipicolinate + NADP(+) + H2O = (2S,4S)-4-hydroxy-2,3,4,5-tetrahydrodipicolinate + NADPH + H(+). Its pathway is amino-acid biosynthesis; L-lysine biosynthesis via DAP pathway; (S)-tetrahydrodipicolinate from L-aspartate: step 4/4. Functionally, catalyzes the conversion of 4-hydroxy-tetrahydrodipicolinate (HTPA) to tetrahydrodipicolinate. This chain is 4-hydroxy-tetrahydrodipicolinate reductase, found in Rickettsia canadensis (strain McKiel).